The following is a 156-amino-acid chain: Acyl carrier protein, mitochondrial (156 aa).

The transit peptide at 1 to 68 (MASRVLCACV…GTVTHLCRQY (68 aa)) directs the protein to the mitochondrion. Residues 77–152 (DGIKDRVLYV…EIVDYIADKK (76 aa)) enclose the Carrier domain. Lys-88 carries the N6-acetyllysine modification. Residue Ser-112 is modified to O-(pantetheine 4'-phosphoryl)serine.

The protein belongs to the acyl carrier protein (ACP) family. In terms of assembly, mammalian complex I is composed of 45 different subunits. Interacts with ETFRF1. Identified in a complex composed of MALSU1, MIEF1 upstream open reading frame protein and NDUFAB1; within the trimeric complex, MIEF1 upstream open reading frame protein functions as a bridging scaffold that interacts with MALSU1 on one side, and with NDUFAB1 on the other side. The complex interacts with the mitochondrial large ribosomal subunit. Interacts with alpha-1-microglobulin chain; this interaction is required for the maintenance of mitochondrial redox homeostasis. Component of the mitochondrial core iron-sulfur cluster (ISC) complex composed of NFS1, LYRM4, NDUFAB1, ISCU, FXN, and FDX2; this complex is a heterohexamer containing two copies of each monomer. Component of the cyteine desulfurase complex composed of NFS1, LYRM4 and NDUFAB1; this complex contributes to the stability and cysteine desulfurase activity of NFS1. Post-translationally, phosphopantetheinylation at Ser-112 is essential for interactions with LYR motif-containing proteins.

The protein resides in the mitochondrion. Carrier of the growing fatty acid chain in fatty acid biosynthesis. Accessory and non-catalytic subunit of the mitochondrial membrane respiratory chain NADH dehydrogenase (Complex I), which functions in the transfer of electrons from NADH to the respiratory chain. Accessory protein, of the core iron-sulfur cluster (ISC) assembly complex, that regulates, in association with LYRM4, the stability and the cysteine desulfurase activity of NFS1 and participates in the [2Fe-2S] clusters assembly on the scaffolding protein ISCU. The core iron-sulfur cluster (ISC) assembly complex is involved in the de novo synthesis of a [2Fe-2S] cluster, the first step of the mitochondrial iron-sulfur protein biogenesis. This process is initiated by the cysteine desulfurase complex (NFS1:LYRM4:NDUFAB1) that produces persulfide which is delivered on the scaffold protein ISCU in a FXN-dependent manner. Then this complex is stabilized by FDX2 which provides reducing equivalents to accomplish the [2Fe-2S] cluster assembly. Finally, the [2Fe-2S] cluster is transferred from ISCU to chaperone proteins, including HSCB, HSPA9 and GLRX5. This chain is Acyl carrier protein, mitochondrial, found in Mus musculus (Mouse).